Consider the following 443-residue polypeptide: Tol-Pal system protein TolB (443 aa).

Positions 1–33 (MKIGIINTKIRTVFSAFACMIAASLVCTMPARA) are cleaved as a signal peptide.

Belongs to the TolB family. The Tol-Pal system is composed of five core proteins: the inner membrane proteins TolA, TolQ and TolR, the periplasmic protein TolB and the outer membrane protein Pal. They form a network linking the inner and outer membranes and the peptidoglycan layer.

Its subcellular location is the periplasm. Its function is as follows. Part of the Tol-Pal system, which plays a role in outer membrane invagination during cell division and is important for maintaining outer membrane integrity. The protein is Tol-Pal system protein TolB of Brucella anthropi (strain ATCC 49188 / DSM 6882 / CCUG 24695 / JCM 21032 / LMG 3331 / NBRC 15819 / NCTC 12168 / Alc 37) (Ochrobactrum anthropi).